An 81-amino-acid polypeptide reads, in one-letter code: RNA-binding protein Hfq (81 aa).

Residues 10–69 (DPFLNTLRKEHIPVSIYLVNGIKLQGHIDSFDQYVVLLKNTVTQMVYKHAISTVVPARAV) form the Sm domain.

The protein belongs to the Hfq family. In terms of assembly, homohexamer.

Functionally, RNA chaperone that binds small regulatory RNA (sRNAs) and mRNAs to facilitate mRNA translational regulation in response to envelope stress, environmental stress and changes in metabolite concentrations. Also binds with high specificity to tRNAs. This Nitrosospira multiformis (strain ATCC 25196 / NCIMB 11849 / C 71) protein is RNA-binding protein Hfq.